The following is a 138-amino-acid chain: Cysteine desulfuration protein SufE (138 aa).

Catalysis depends on cysteine 51, which acts as the Cysteine persulfide intermediate.

The protein belongs to the SufE family. In terms of assembly, homodimer. Interacts with SufS.

It is found in the cytoplasm. The protein operates within cofactor biosynthesis; iron-sulfur cluster biosynthesis. Participates in cysteine desulfuration mediated by SufS. Cysteine desulfuration mobilizes sulfur from L-cysteine to yield L-alanine and constitutes an essential step in sulfur metabolism for biosynthesis of a variety of sulfur-containing biomolecules. Functions as a sulfur acceptor for SufS, by mediating the direct transfer of the sulfur atom from the S-sulfanylcysteine of SufS, an intermediate product of cysteine desulfuration process. The sequence is that of Cysteine desulfuration protein SufE from Klebsiella pneumoniae subsp. pneumoniae (strain ATCC 700721 / MGH 78578).